Consider the following 51-residue polypeptide: Mitochondrial import receptor subunit TOM5 homolog (51 aa).

M1 is modified (N-acetylmethionine). K10 participates in a covalent cross-link: Glycyl lysine isopeptide (Lys-Gly) (interchain with G-Cter in SUMO2). A helical membrane pass occupies residues 27-45; that stretch reads SIRNFLIYVALLRVTPFIL.

This sequence belongs to the Tom5 family. In terms of assembly, forms part of the preprotein translocase complex of the outer mitochondrial membrane (TOM complex) which consists of at least 7 different proteins (TOMM5, TOMM6, TOMM7, TOMM20, TOMM22, TOMM40 and TOMM70).

The protein resides in the mitochondrion outer membrane. The chain is Mitochondrial import receptor subunit TOM5 homolog from Bos taurus (Bovine).